The sequence spans 83 residues: Male-specific opa-containing protein (83 aa).

Residues methionine 1–alanine 18 form the signal peptide. Residues aspartate 23–glycine 83 are disordered. Positions proline 28–alanine 49 are enriched in low complexity. Positions proline 50 to alanine 59 are enriched in pro residues.

Adult male abdomen.

In terms of biological role, may be a male specific regulatory factor. The sequence is that of Male-specific opa-containing protein (msopa) from Drosophila melanogaster (Fruit fly).